Consider the following 631-residue polypeptide: 1-deoxy-D-xylulose-5-phosphate synthase (631 aa).

Residues H87 and 128–130 contribute to the thiamine diphosphate site; that span reads GHS. D159 is a Mg(2+) binding site. Thiamine diphosphate contacts are provided by residues 160–161, N188, F295, and E378; that span reads GA. N188 is a Mg(2+) binding site.

This sequence belongs to the transketolase family. DXPS subfamily. Homodimer. It depends on Mg(2+) as a cofactor. Thiamine diphosphate serves as cofactor.

It catalyses the reaction D-glyceraldehyde 3-phosphate + pyruvate + H(+) = 1-deoxy-D-xylulose 5-phosphate + CO2. Its pathway is metabolic intermediate biosynthesis; 1-deoxy-D-xylulose 5-phosphate biosynthesis; 1-deoxy-D-xylulose 5-phosphate from D-glyceraldehyde 3-phosphate and pyruvate: step 1/1. Catalyzes the acyloin condensation reaction between C atoms 2 and 3 of pyruvate and glyceraldehyde 3-phosphate to yield 1-deoxy-D-xylulose-5-phosphate (DXP). This chain is 1-deoxy-D-xylulose-5-phosphate synthase, found in Pseudomonas syringae pv. tomato (strain ATCC BAA-871 / DC3000).